The chain runs to 742 residues: Tegument protein UL47 (742 aa).

A compositionally biased stretch (basic and acidic residues) spans 1-10 (MDAARDGRPE). 2 disordered regions span residues 1 to 128 (MDAA…TAHL) and 155 to 199 (EFPP…DDAA). Residues 10 to 30 (ERRPRRSGTYRTHPFQRPSAR) carry the Nuclear localization signal motif. Positions 18-37 (TYRTHPFQRPSARRSLLDAL) are enriched in low complexity. Residues 38-62 (RAADAEAAERPRVRRPRPDFQRPPD) show a composition bias toward basic and acidic residues. Acidic residues predominate over residues 63 to 88 (EDTSEDENVYDYIDGDSSDSADDYDS). A Nuclear export signal motif is present at residues 95–122 (RGPNHGAGDAMDTDAPPERAPEGGAPQD). The Nuclear export signal signature appears at 485–495 (LSAYLTLFVAL).

It belongs to the alphaherpesvirinae HHV-1 UL47 family. Interacts with US3 kinase. Interacts with UL31 and UL34; these interactions seem important for efficient virion nuclear egress. Interacts with UL41/VHS. Phosphorylated by US3. This phosphorylation is required for proper nuclear localization.

It localises to the virion tegument. The protein resides in the host nucleus. It is found in the host cytoplasm. Functionally, tegument protein that can bind to various RNA transcripts. Plays a role in the attenuation of selective viral and cellular mRNA degradation by modulating the activity of host shutoff RNase UL41/VHS. Also plays a role in the primary envelopment of virions in the perinuclear space, probably by interacting with two nuclear egress proteins UL31 and UL34. The polypeptide is Tegument protein UL47 (Bos taurus (Bovine)).